A 211-amino-acid polypeptide reads, in one-letter code: Thioredoxin domain-containing protein 9 homolog (211 aa).

Residues 68–178 enclose the Thioredoxin domain; the sequence is YSEIHSEKDF…LEERIARAQV (111 aa). The span at 184 to 203 shows a compositional bias: polar residues; it reads ESSSLKPKSTTQVRRNVRQS. The tract at residues 184-211 is disordered; the sequence is ESSSLKPKSTTQVRRNVRQSARSDSDSE.

This Arabidopsis thaliana (Mouse-ear cress) protein is Thioredoxin domain-containing protein 9 homolog.